Reading from the N-terminus, the 173-residue chain is MSLLKILYYPDIRLRILAKPVKEINKKIQKIANDMIDTMYQEEGIGLAATQVNIPLQIIVVNTMEQKKNNLVLINPKIIKKEGDISIEEGCLSIPEYQASIPRSNYIQVQAVNLDGEKIEIEAKSILSICIQHEIDHLKGKLFIDYLSKFKRERIQKKFEKINKKNKKFSIKE.

Fe cation contacts are provided by Cys-91 and His-133. Glu-134 is an active-site residue. Fe cation is bound at residue His-137.

The protein belongs to the polypeptide deformylase family. The cofactor is Fe(2+).

The enzyme catalyses N-terminal N-formyl-L-methionyl-[peptide] + H2O = N-terminal L-methionyl-[peptide] + formate. Functionally, removes the formyl group from the N-terminal Met of newly synthesized proteins. Requires at least a dipeptide for an efficient rate of reaction. N-terminal L-methionine is a prerequisite for activity but the enzyme has broad specificity at other positions. The polypeptide is Peptide deformylase (Buchnera aphidicola subsp. Acyrthosiphon pisum (strain 5A)).